Here is a 262-residue protein sequence, read N- to C-terminus: Small ribosomal subunit protein eS1z (262 aa).

Basic residues predominate over residues M1 to K18. Residues M1–V21 form a disordered region.

It belongs to the eukaryotic ribosomal protein eS1 family. Component of the small ribosomal subunit. Mature ribosomes consist of a small (40S) and a large (60S) subunit. The 40S subunit contains about 33 different proteins and 1 molecule of RNA (18S). The 60S subunit contains about 49 different proteins and 3 molecules of RNA (25S, 5.8S and 5S).

It localises to the cytoplasm. The sequence is that of Small ribosomal subunit protein eS1z from Arabidopsis thaliana (Mouse-ear cress).